Here is a 463-residue protein sequence, read N- to C-terminus: Glutamyl-tRNA reductase (463 aa).

Substrate contacts are provided by residues 49-52 (TCNR), Ser-109, 114-116 (EQQ), and Gln-120. The active-site Nucleophile is the Cys-50. 196–201 (GAGAMS) contacts NADP(+).

It belongs to the glutamyl-tRNA reductase family. Homodimer.

The enzyme catalyses (S)-4-amino-5-oxopentanoate + tRNA(Glu) + NADP(+) = L-glutamyl-tRNA(Glu) + NADPH + H(+). The protein operates within porphyrin-containing compound metabolism; protoporphyrin-IX biosynthesis; 5-aminolevulinate from L-glutamyl-tRNA(Glu): step 1/2. In terms of biological role, catalyzes the NADPH-dependent reduction of glutamyl-tRNA(Glu) to glutamate 1-semialdehyde (GSA). The sequence is that of Glutamyl-tRNA reductase from Corynebacterium glutamicum (strain R).